The following is a 424-amino-acid chain: Glutamate-1-semialdehyde 2,1-aminomutase (424 aa).

Lys258 carries the post-translational modification N6-(pyridoxal phosphate)lysine.

Belongs to the class-III pyridoxal-phosphate-dependent aminotransferase family. HemL subfamily. Pyridoxal 5'-phosphate serves as cofactor.

Its subcellular location is the cytoplasm. The catalysed reaction is (S)-4-amino-5-oxopentanoate = 5-aminolevulinate. The protein operates within porphyrin-containing compound metabolism; protoporphyrin-IX biosynthesis; 5-aminolevulinate from L-glutamyl-tRNA(Glu): step 2/2. This chain is Glutamate-1-semialdehyde 2,1-aminomutase, found in Pyrobaculum islandicum (strain DSM 4184 / JCM 9189 / GEO3).